Here is a 664-residue protein sequence, read N- to C-terminus: RBBP8 N-terminal-like protein (664 aa).

The segment covering 125–140 has biased composition (basic and acidic residues); the sequence is LRGLGDRPKPRAKEGT. 2 disordered regions span residues 125–284 and 369–664; these read LRGL…KLSP and RAGS…WEET. Residues 241–255 are compositionally biased toward pro residues; the sequence is GTPPPLPARSSPPSP. The segment covering 437–454 has biased composition (basic and acidic residues); that stretch reads ALDKPLDLSEWGRARGQD. Polar residues predominate over residues 481–496; that stretch reads SGPLTRSPQALSNGTK. The span at 516-528 shows a compositional bias: low complexity; the sequence is LPGSQLSLSSPGS. Residues 537–552 show a composition bias toward pro residues; that stretch reads PLPPPHPQPPPHPQPP. The span at 554-570 shows a compositional bias: basic and acidic residues; sequence LDGHPEPSKAEVLRPES. The span at 584–597 shows a compositional bias: polar residues; sequence GLSSQAEATTSTTG. A compositionally biased stretch (basic residues) spans 628 to 637; that stretch reads KKPSRGRRKL. Over residues 654–664 the composition is skewed to polar residues; it reads PSPNSSPWEET.

This Homo sapiens (Human) protein is RBBP8 N-terminal-like protein (RBBP8NL).